The following is a 2096-amino-acid chain: HEAT repeat-containing protein 1 homolog (2096 aa).

One copy of the HEAT repeat lies at 2058–2096 (TVPFIAELLEDEHQRVEKNTRTGVQELETILGESVQKYL).

Belongs to the HEATR1/UTP10 family. As to quaternary structure, part of the small subunit (SSU) processome, composed of more than 70 proteins and the RNA chaperone small nucleolar RNA (snoRNA) U3. Interacts with MYC; the interaction is required for localization of MYC to the nucleolus.

It localises to the nucleus. The protein resides in the nucleolus. Its function is as follows. Ribosome biogenesis factor; required for recruitment of Myc to nucleoli. Involved in nucleolar processing of pre-18S ribosomal RNA. Required for optimal pre-ribosomal RNA transcription by RNA polymerase I. Part of the small subunit (SSU) processome, first precursor of the small eukaryotic ribosomal subunit. During the assembly of the SSU processome in the nucleolus, many ribosome biogenesis factors, an RNA chaperone and ribosomal proteins associate with the nascent pre-rRNA and work in concert to generate RNA folding, modifications, rearrangements and cleavage as well as targeted degradation of pre-ribosomal RNA by the RNA exosome. Involved in neuronal-lineage cell proliferation during larval development. This Drosophila melanogaster (Fruit fly) protein is HEAT repeat-containing protein 1 homolog.